We begin with the raw amino-acid sequence, 189 residues long: MEIDKELAPQDRTVTVATVLPAVPGPSPLTIKQPFQSEVLFAGTKDAEASLTIANIDSVSTLTTFYRHASLESLWVTIHPTLQAPTFPTTVGVCWVPANSPVTPAQITKTYGGQIFCIGGAINTLSPLIVKCPLEMMNPRVKDSIQYLDSPKLLISITAQPTAPPASTCIITVSGTLSMHSPLITDTST.

The residue at position 1 (M1) is an N-acetylmethionine; by host.

It belongs to the tymoviruses capsid protein family.

Its subcellular location is the virion. In terms of biological role, self-assembles to form a T=3 icosahedral capsid composed of 180 copies of the capsid protein. The capsid encapsulates the single-stranded RNA genome. A pentameric unit may be lost during decapsidation. The polypeptide is Capsid protein (Brassica (Chinese cabbage)).